The chain runs to 379 residues: Cytochrome b (379 aa).

4 helical membrane-spanning segments follow: residues 33–53 (FGSL…FLAM), 77–98 (WLIR…YLHI), 113–133 (WNVG…GYVL), and 178–198 (FFAF…VHLI). Residues H83 and H97 each coordinate heme b. Heme b-binding residues include H182 and H196. H201 provides a ligand contact to a ubiquinone. Helical transmembrane passes span 226 to 246 (YKDI…ALFS), 288 to 308 (LGGV…PLLH), 320 to 340 (FTQV…WIGG), and 347 to 367 (FIII…VLAP).

This sequence belongs to the cytochrome b family. As to quaternary structure, the cytochrome bc1 complex contains 3 respiratory subunits (MT-CYB, CYC1 and UQCRFS1), 2 core proteins (UQCRC1 and UQCRC2) and probably 6 low-molecular weight proteins. The cofactor is heme b.

The protein resides in the mitochondrion inner membrane. In terms of biological role, component of the ubiquinol-cytochrome c reductase complex (complex III or cytochrome b-c1 complex) that is part of the mitochondrial respiratory chain. The b-c1 complex mediates electron transfer from ubiquinol to cytochrome c. Contributes to the generation of a proton gradient across the mitochondrial membrane that is then used for ATP synthesis. The chain is Cytochrome b (mt-cyb) from Poeciliopsis occidentalis (Gila topminnow).